Here is a 380-residue protein sequence, read N- to C-terminus: Dynactin subunit 2 (380 aa).

Residues 1-40 (MADPKFQNLPGIAYDQPDVYETPDDPETDTSDYYEEEPEN) form a disordered region. Over residues 21-40 (ETPDDPETDTSDYYEEEPEN) the composition is skewed to acidic residues. 2 coiled-coil regions span residues 100–135 (VQKC…QSYD) and 353–377 (ETFA…TAIS).

It belongs to the dynactin subunit 2 family. In terms of assembly, subunit of dynactin, a multiprotein complex associated with dynein.

It localises to the cytoplasm. Its subcellular location is the cytoskeleton. It is found in the membrane. Its function is as follows. Modulates cytoplasmic dynein binding to an organelle, and plays a role in prometaphase chromosome alignment and spindle organization during mitosis. May play a role in synapse formation during brain development. The sequence is that of Dynactin subunit 2 from Drosophila pseudoobscura pseudoobscura (Fruit fly).